Reading from the N-terminus, the 235-residue chain is Small ribosomal subunit protein eS4 (235 aa).

The 72-residue stretch at 43–114 folds into the S4 RNA-binding domain; that stretch reads IPLLLIVRDM…DPHRFLRLIE (72 aa).

This sequence belongs to the eukaryotic ribosomal protein eS4 family.

The protein is Small ribosomal subunit protein eS4 of Korarchaeum cryptofilum (strain OPF8).